We begin with the raw amino-acid sequence, 545 residues long: Membrane protein insertase YidC (545 aa).

The next 6 helical transmembrane spans lie at 10-30 (AIYL…IFFS), 319-339 (LLYF…NVIP), 341-361 (WGLS…PLTF), 407-427 (LGGC…YGLV), 467-487 (ILPF…SNVS), and 502-522 (MPIM…IYWI).

Belongs to the OXA1/ALB3/YidC family. Type 1 subfamily. Interacts with the Sec translocase complex via SecD. Specifically interacts with transmembrane segments of nascent integral membrane proteins during membrane integration.

Its subcellular location is the cell inner membrane. Its function is as follows. Required for the insertion and/or proper folding and/or complex formation of integral membrane proteins into the membrane. Involved in integration of membrane proteins that insert both dependently and independently of the Sec translocase complex, as well as at least some lipoproteins. Aids folding of multispanning membrane proteins. The chain is Membrane protein insertase YidC from Borrelia hermsii (strain HS1 / DAH).